The following is a 238-amino-acid chain: GATA transcription factor 7 (238 aa).

The interval 24–64 (TSLESSSSQRKEDEQEREKFKSFSDQSTRLSPPEDLLSFPG) is disordered. Over residues 32-45 (QRKEDEQEREKFKS) the composition is skewed to basic and acidic residues. A Nuclear localization signal motif is present at residues 112-119 (KPRSKRRR). The GATA-type zinc finger occupies 160–214 (QQLRRCCSHCGVQKTPQWRMGPLGAKTLCNACGVRFKSGRLLPEYRPACSPTFTN).

It belongs to the type IV zinc-finger family. Class A subfamily.

It localises to the nucleus. Its function is as follows. Transcriptional activator that specifically binds 5'-GATA-3' or 5'-GAT-3' motifs within gene promoters. May be involved in the regulation of some light-responsive genes. The sequence is that of GATA transcription factor 7 (GATA7) from Arabidopsis thaliana (Mouse-ear cress).